The primary structure comprises 324 residues: Beta-ketoacyl-[acyl-carrier-protein] synthase III (324 aa).

Active-site residues include C116 and H251. The ACP-binding stretch occupies residues 252 to 256; that stretch reads QANLR. N281 is a catalytic residue.

The protein belongs to the thiolase-like superfamily. FabH family. As to quaternary structure, homodimer.

It is found in the cytoplasm. The enzyme catalyses malonyl-[ACP] + acetyl-CoA + H(+) = 3-oxobutanoyl-[ACP] + CO2 + CoA. Its pathway is lipid metabolism; fatty acid biosynthesis. In terms of biological role, catalyzes the condensation reaction of fatty acid synthesis by the addition to an acyl acceptor of two carbons from malonyl-ACP. Catalyzes the first condensation reaction which initiates fatty acid synthesis and may therefore play a role in governing the total rate of fatty acid production. Possesses both acetoacetyl-ACP synthase and acetyl transacylase activities. Its substrate specificity determines the biosynthesis of branched-chain and/or straight-chain of fatty acids. This is Beta-ketoacyl-[acyl-carrier-protein] synthase III from Xylella fastidiosa (strain Temecula1 / ATCC 700964).